Reading from the N-terminus, the 150-residue chain is Large ribosomal subunit protein uL15 (150 aa).

Residues 18–43 are disordered; it reads IVGRGSSSGWGKTSGKGHKGQQARSG.

Belongs to the universal ribosomal protein uL15 family. Part of the 50S ribosomal subunit.

Functionally, binds to the 23S rRNA. The polypeptide is Large ribosomal subunit protein uL15 (Treponema denticola (strain ATCC 35405 / DSM 14222 / CIP 103919 / JCM 8153 / KCTC 15104)).